Consider the following 78-residue polypeptide: MSRKCQITGKKANNAMAVSHSHRRTKKLQEVNLQWKRVWWPEGNRFVRLRLSTKAIKTLEKKGIDAMAREAGINLNKL.

The disordered stretch occupies residues 1–23 (MSRKCQITGKKANNAMAVSHSHR).

This sequence belongs to the bacterial ribosomal protein bL28 family.

The chain is Large ribosomal subunit protein bL28 from Picosynechococcus sp. (strain ATCC 27264 / PCC 7002 / PR-6) (Agmenellum quadruplicatum).